The chain runs to 478 residues: Protein nucleotidyltransferase YdiU (478 aa).

Residues glycine 84, glycine 86, arginine 87, lysine 107, aspartate 119, glycine 120, arginine 170, and arginine 177 each coordinate ATP. Aspartate 246 functions as the Proton acceptor in the catalytic mechanism. Mg(2+) is bound by residues asparagine 247 and aspartate 256. Aspartate 256 contributes to the ATP binding site.

The protein belongs to the SELO family. Mg(2+) serves as cofactor. Mn(2+) is required as a cofactor.

It catalyses the reaction L-seryl-[protein] + ATP = 3-O-(5'-adenylyl)-L-seryl-[protein] + diphosphate. It carries out the reaction L-threonyl-[protein] + ATP = 3-O-(5'-adenylyl)-L-threonyl-[protein] + diphosphate. The enzyme catalyses L-tyrosyl-[protein] + ATP = O-(5'-adenylyl)-L-tyrosyl-[protein] + diphosphate. The catalysed reaction is L-histidyl-[protein] + UTP = N(tele)-(5'-uridylyl)-L-histidyl-[protein] + diphosphate. It catalyses the reaction L-seryl-[protein] + UTP = O-(5'-uridylyl)-L-seryl-[protein] + diphosphate. It carries out the reaction L-tyrosyl-[protein] + UTP = O-(5'-uridylyl)-L-tyrosyl-[protein] + diphosphate. Functionally, nucleotidyltransferase involved in the post-translational modification of proteins. It can catalyze the addition of adenosine monophosphate (AMP) or uridine monophosphate (UMP) to a protein, resulting in modifications known as AMPylation and UMPylation. The protein is Protein nucleotidyltransferase YdiU of Escherichia coli O7:K1 (strain IAI39 / ExPEC).